A 754-amino-acid polypeptide reads, in one-letter code: Photosystem I P700 chlorophyll a apoprotein A1 (754 aa).

The next 8 helical transmembrane spans lie at 72–95, 158–181, 197–221, 293–311, 351–374, 390–416, 438–460, and 535–553; these read IFSA…FHGA, LYCT…FHYH, MNHH…HVSL, TAHH…GHMY, WHAQ…HHMY, LSLF…IFMV, AIIS…LYIH, and FMVH…LILL. Cys577 and Cys586 together coordinate [4Fe-4S] cluster. The next 2 helical transmembrane spans lie at 593-614 and 668-690; these read HVFL…HFSW and LSAY…MFLF. His679 contacts chlorophyll a'. Met687 and Tyr695 together coordinate chlorophyll a. Trp696 is a binding site for phylloquinone. A helical membrane pass occupies residues 728–748; it reads AVGVAHYLLGGIVTTWAFFLA.

Belongs to the PsaA/PsaB family. The PsaA/B heterodimer binds the P700 chlorophyll special pair and subsequent electron acceptors. PSI consists of a core antenna complex that captures photons, and an electron transfer chain that converts photonic excitation into a charge separation. The cyanobacterial PSI reaction center is composed of one copy each of PsaA,B,C,D,E,F,I,J,K,L,M and X, and forms trimeric complexes. The cofactor is PSI electron transfer chain: 5 chlorophyll a, 1 chlorophyll a', 2 phylloquinones and 3 4Fe-4S clusters. PSI core antenna: 90 chlorophyll a, 22 carotenoids, 3 phospholipids and 1 galactolipid. P700 is a chlorophyll a/chlorophyll a' dimer, A0 is one or more chlorophyll a, A1 is one or both phylloquinones and FX is a shared 4Fe-4S iron-sulfur center..

Its subcellular location is the cellular thylakoid membrane. It catalyses the reaction reduced [plastocyanin] + hnu + oxidized [2Fe-2S]-[ferredoxin] = oxidized [plastocyanin] + reduced [2Fe-2S]-[ferredoxin]. In terms of biological role, psaA and PsaB bind P700, the primary electron donor of photosystem I (PSI), as well as the electron acceptors A0, A1 and FX. PSI is a plastocyanin/cytochrome c6-ferredoxin oxidoreductase, converting photonic excitation into a charge separation, which transfers an electron from the donor P700 chlorophyll pair to the spectroscopically characterized acceptors A0, A1, FX, FA and FB in turn. Oxidized P700 is reduced on the lumenal side of the thylakoid membrane by plastocyanin or cytochrome c6. In Rippkaea orientalis (strain PCC 8801 / RF-1) (Cyanothece sp. (strain PCC 8801)), this protein is Photosystem I P700 chlorophyll a apoprotein A1.